Reading from the N-terminus, the 179-residue chain is Macro domain-containing protein XAC3343 (179 aa).

Residues 1–175 (MRIEVWQGDI…AYQQALATQE (175 aa)) enclose the Macro domain.

It belongs to the MacroD-type family.

The sequence is that of Macro domain-containing protein XAC3343 from Xanthomonas axonopodis pv. citri (strain 306).